The sequence spans 387 residues: Solute carrier family 25 protein Shawn (387 aa).

Solcar repeat units lie at residues 37 to 156, 179 to 263, and 269 to 366; these read IRPL…FKAR, IPFL…LKSS, and PTFS…GKSF. A run of 6 helical transmembrane segments spans residues 43–63, 128–148, 179–199, 235–255, 275–295, and 337–357; these read VASA…LDVI, LWSG…IYFV, IPFL…VTCV, LWRG…IYWT, FAAG…FDVV, and AIFS…AIMI.

This sequence belongs to the mitochondrial carrier (TC 2.A.29) family.

The protein resides in the mitochondrion inner membrane. Mitochondrial transporter required for glutathione import into mitochondria. This is Solute carrier family 25 protein Shawn from Drosophila melanogaster (Fruit fly).